The primary structure comprises 367 residues: uncharacterized protein (367 aa).

Residues 333–367 (RERRPTLNAQRAHAAAQQQPRRRNRRQQGTGASAS) are disordered. Residues 341-351 (AQRAHAAAQQQ) show a composition bias toward low complexity.

This is an uncharacterized protein from Amazona oratrix (yellow-headed parrot).